The chain runs to 324 residues: BURP domain-containing protein 5 (324 aa).

The first 30 residues, 1–30 (MCATLCTLLDEISILILMLLLIQLEIRVSA), serve as a signal peptide directing secretion. The 215-residue stretch at 109–323 (FFLETNLQSS…QPDVVVWTRR (215 aa)) folds into the BURP domain.

Expressed in panicles.

The polypeptide is BURP domain-containing protein 5 (BURP5) (Oryza sativa subsp. japonica (Rice)).